The following is a 20-amino-acid chain: Hemoglobinase-like protein 1 (20 aa).

The protein belongs to the peptidase C13 family.

The enzyme catalyses Hydrolysis of proteins and small molecule substrates at -Asn-|-Xaa- bonds.. This chain is Hemoglobinase-like protein 1, found in Fasciola hepatica (Liver fluke).